Consider the following 150-residue polypeptide: Transcriptional repressor NrdR (150 aa).

The disordered stretch occupies residues 1 to 26; it reads MKCPFCGNSDSKVVDSRPDKGGSGIR. A zinc finger spans residues 3–34; that stretch reads CPFCGNSDSKVVDSRPDKGGSGIRRRRECEQC. The ATP-cone domain maps to 49-139; that stretch reads PLVLKKDGRR…VYRSFRDINE (91 aa).

It belongs to the NrdR family. The cofactor is Zn(2+).

In terms of biological role, negatively regulates transcription of bacterial ribonucleotide reductase nrd genes and operons by binding to NrdR-boxes. The polypeptide is Transcriptional repressor NrdR (Pelobacter propionicus (strain DSM 2379 / NBRC 103807 / OttBd1)).